A 278-amino-acid polypeptide reads, in one-letter code: 4-hydroxy-3-methylbut-2-enyl diphosphate reductase (278 aa).

Residue cysteine 12 participates in [4Fe-4S] cluster binding. Positions 36 and 70 each coordinate (2E)-4-hydroxy-3-methylbut-2-enyl diphosphate. Dimethylallyl diphosphate is bound by residues histidine 36 and histidine 70. Isopentenyl diphosphate-binding residues include histidine 36 and histidine 70. Residue cysteine 92 participates in [4Fe-4S] cluster binding. A (2E)-4-hydroxy-3-methylbut-2-enyl diphosphate-binding site is contributed by histidine 120. Histidine 120 is a binding site for dimethylallyl diphosphate. An isopentenyl diphosphate-binding site is contributed by histidine 120. The Proton donor role is filled by glutamate 122. A (2E)-4-hydroxy-3-methylbut-2-enyl diphosphate-binding site is contributed by threonine 158. [4Fe-4S] cluster is bound at residue cysteine 186. Residues serine 214, asparagine 216, and serine 258 each contribute to the (2E)-4-hydroxy-3-methylbut-2-enyl diphosphate site. 3 residues coordinate dimethylallyl diphosphate: serine 214, asparagine 216, and serine 258. Positions 214, 216, and 258 each coordinate isopentenyl diphosphate.

The protein belongs to the IspH family. [4Fe-4S] cluster is required as a cofactor.

It carries out the reaction isopentenyl diphosphate + 2 oxidized [2Fe-2S]-[ferredoxin] + H2O = (2E)-4-hydroxy-3-methylbut-2-enyl diphosphate + 2 reduced [2Fe-2S]-[ferredoxin] + 2 H(+). The catalysed reaction is dimethylallyl diphosphate + 2 oxidized [2Fe-2S]-[ferredoxin] + H2O = (2E)-4-hydroxy-3-methylbut-2-enyl diphosphate + 2 reduced [2Fe-2S]-[ferredoxin] + 2 H(+). It functions in the pathway isoprenoid biosynthesis; dimethylallyl diphosphate biosynthesis; dimethylallyl diphosphate from (2E)-4-hydroxy-3-methylbutenyl diphosphate: step 1/1. Its pathway is isoprenoid biosynthesis; isopentenyl diphosphate biosynthesis via DXP pathway; isopentenyl diphosphate from 1-deoxy-D-xylulose 5-phosphate: step 6/6. Catalyzes the conversion of 1-hydroxy-2-methyl-2-(E)-butenyl 4-diphosphate (HMBPP) into a mixture of isopentenyl diphosphate (IPP) and dimethylallyl diphosphate (DMAPP). Acts in the terminal step of the DOXP/MEP pathway for isoprenoid precursor biosynthesis. The chain is 4-hydroxy-3-methylbut-2-enyl diphosphate reductase from Campylobacter lari (strain RM2100 / D67 / ATCC BAA-1060).